We begin with the raw amino-acid sequence, 361 residues long: Phospho-N-acetylmuramoyl-pentapeptide-transferase (361 aa).

Helical transmembrane passes span 28–48, 74–94, 99–119, 133–153, 168–188, 203–223, 236–256, 263–283, 288–308, and 338–358; these read LAII…IKFL, TMGG…LADL, IWIT…DDYA, SKFL…EYLD, LSLD…VGSS, VPIA…GNLI, TGEL…FLWF, VFMG…ISVI, IVLA…ILQV, and KVVI…LSSL.

It belongs to the glycosyltransferase 4 family. MraY subfamily. Requires Mg(2+) as cofactor.

It is found in the cell inner membrane. It carries out the reaction UDP-N-acetyl-alpha-D-muramoyl-L-alanyl-gamma-D-glutamyl-meso-2,6-diaminopimeloyl-D-alanyl-D-alanine + di-trans,octa-cis-undecaprenyl phosphate = di-trans,octa-cis-undecaprenyl diphospho-N-acetyl-alpha-D-muramoyl-L-alanyl-D-glutamyl-meso-2,6-diaminopimeloyl-D-alanyl-D-alanine + UMP. Its pathway is cell wall biogenesis; peptidoglycan biosynthesis. Functionally, catalyzes the initial step of the lipid cycle reactions in the biosynthesis of the cell wall peptidoglycan: transfers peptidoglycan precursor phospho-MurNAc-pentapeptide from UDP-MurNAc-pentapeptide onto the lipid carrier undecaprenyl phosphate, yielding undecaprenyl-pyrophosphoryl-MurNAc-pentapeptide, known as lipid I. The protein is Phospho-N-acetylmuramoyl-pentapeptide-transferase of Rickettsia prowazekii (strain Madrid E).